The chain runs to 321 residues: MPQHGRHAPRRGSMGFWPRKRASRIYPRIKTWPKIEEIKPLAFAAYKVGMTHTILNINGERVFTPVTVLEAPELLVIGAKAYKKENGALKEISSLYFNDLPQYVFRKIPKLKNYNFEEKKEQFLSKADNADEVKIIVSTQPWKIKLKKTPEIFDIPIGGSDVNKKLEYALSLLGKELSINDVFKEGQYVDVIAVTKGKGFQGVIKRFHVHRRQHKSEKGVRKVGAIGSRGPGRIFPTVPMPGQMGYHRRTEYNKLIIKIGEPLNVEGGWVRYGQVIGPTILLKGSVPGPRKRLIILREAIRPPRKQEKVEGIEYISLSPKN.

This sequence belongs to the universal ribosomal protein uL3 family. Part of the 50S ribosomal subunit. Forms a cluster with proteins L14 and L24e.

In terms of biological role, one of the primary rRNA binding proteins, it binds directly near the 3'-end of the 23S rRNA, where it nucleates assembly of the 50S subunit. This chain is Large ribosomal subunit protein uL3, found in Nanoarchaeum equitans (strain Kin4-M).